The primary structure comprises 179 residues: D-glycero-beta-D-manno-heptose-1,7-bisphosphate 7-phosphatase (179 aa).

The active-site Nucleophile is the aspartate 7. 2 residues coordinate Mg(2+): aspartate 7 and aspartate 9. Residue aspartate 7 coordinates substrate. Aspartate 9 acts as the Proton donor in catalysis. Substrate is bound by residues 15-19 (DSDAF), 50-53 (TNQS), and arginine 57. The Zn(2+) site is built by cysteine 89, histidine 91, cysteine 97, and cysteine 99. Arginine 100 is a substrate binding site. A Mg(2+)-binding site is contributed by aspartate 126. Position 129 (arginine 129) interacts with substrate.

In terms of assembly, monomer. Mg(2+) is required as a cofactor. Requires Zn(2+) as cofactor.

The protein resides in the cytoplasm. The catalysed reaction is D-glycero-beta-D-manno-heptose 1,7-bisphosphate + H2O = D-glycero-beta-D-manno-heptose 1-phosphate + phosphate. It functions in the pathway nucleotide-sugar biosynthesis; ADP-L-glycero-beta-D-manno-heptose biosynthesis; ADP-L-glycero-beta-D-manno-heptose from D-glycero-beta-D-manno-heptose 7-phosphate: step 2/4. It participates in bacterial outer membrane biogenesis; LPS core biosynthesis. Converts the D-glycero-beta-D-manno-heptose 1,7-bisphosphate (beta-HBP) intermediate into D-glycero-beta-D-manno-heptose 1-phosphate by removing the phosphate group at the C-7 position. The protein is D-glycero-beta-D-manno-heptose-1,7-bisphosphate 7-phosphatase of Bordetella bronchiseptica (strain ATCC BAA-588 / NCTC 13252 / RB50) (Alcaligenes bronchisepticus).